The chain runs to 393 residues: uncharacterized protein (393 aa).

Disordered stretches follow at residues 77 to 118 (DSNN…SIRP) and 259 to 296 (INNN…DESN). Residues 79-92 (NNNNNNNNNNNNNN) show a composition bias toward low complexity. Positions 103 to 114 (IRQSLSSPQQLV) are enriched in polar residues. Over residues 259–289 (INNNNNNNNNNSNNNNNNNNSNNNDNNNNIN) the composition is skewed to low complexity.

This is an uncharacterized protein from Dictyostelium discoideum (Social amoeba).